Here is a 163-residue protein sequence, read N- to C-terminus: T-cell surface glycoprotein CD3 zeta chain (163 aa).

A signal peptide spans 1 to 21; the sequence is MKWKALFTAAILQAQLPITEA. Topologically, residues 22–30 are extracellular; the sequence is QSFGLLDPK. The helical transmembrane segment at 31 to 51 threads the bilayer; it reads LCYLLDGILFIYGVILTALFL. The Cytoplasmic segment spans residues 52–163; it reads RVKFSRSADA…ALHMQALPPR (112 aa). At Ser-58 the chain carries Phosphoserine. ITAM domains are found at residues 61–89, 99–127, and 130–158; these read APAY…LDKR, KPRR…EIGM, and ERRR…LHMQ. A phosphotyrosine mark is found at Tyr-64, Tyr-72, Tyr-83, Tyr-110, Tyr-122, Tyr-141, and Tyr-152. Basic and acidic residues predominate over residues 83–98; the sequence is YDVLDKRRGRDPEMGG. The interval 83 to 111 is disordered; it reads YDVLDKRRGRDPEMGGKPRRKNPQEGLYN.

It belongs to the CD3Z/FCER1G family. In terms of assembly, the TCR-CD3 complex is composed of a CD3D/CD3E and a CD3G/CD3E heterodimers that preferentially associate with TCRalpha and TCRbeta, respectively, to form TCRalpha/CD3E/CD3G and TCRbeta/CD3G/CD3E trimers. In turn, the hexamer interacts with CD3Z homodimer to form the TCR-CD3 complex. Alternatively, TCRalpha and TCRbeta can be replaced by TCRgamma and TCRdelta. Interacts with SLA. Interacts with TRAT1. Interacts with DOCK2. Interacts with SLA2. Interacts with SHB. Interacts with ZAP70. Interacts (tyrosine phosphorylated) with SHC1 (via SH2 domain). Interacts with PTPRC. Interacts with CRK; this interaction regulates CD3Z phosphorylation. Interacts (on T cell side) with CD81, ICAM1 and CD9 at immunological synapses between antigen-presenting cells and T cells. Interacts with CD160. Interacts with LY6E. Interacts with LY6E. The signaling subunit of immunoglobulin gamma (IgG) Fc receptor complex. As a homodimer or a heterodimer with FCER1G, associates with the ligand binding subunit FCGR3A (via transmembrane domain); this interaction is a prerequisite for Fc receptor complex expression on the cell surface. Interacts with CD5. Post-translationally, phosphorylated on Tyr residues after T-cell receptor triggering by LCK in association with CD4/CD8.

It is found in the cell membrane. Functionally, part of the TCR-CD3 complex present on T-lymphocyte cell surface that plays an essential role in adaptive immune response. When antigen presenting cells (APCs) activate T-cell receptor (TCR), TCR-mediated signals are transmitted across the cell membrane by the CD3 chains CD3D, CD3E, CD3G and CD3Z. All CD3 chains contain immunoreceptor tyrosine-based activation motifs (ITAMs) in their cytoplasmic domain. Upon TCR engagement, these motifs become phosphorylated by Src family protein tyrosine kinases LCK and FYN, resulting in the activation of downstream signaling pathways. CD3Z ITAMs phosphorylation creates multiple docking sites for the protein kinase ZAP70 leading to ZAP70 phosphorylation and its conversion into a catalytically active enzyme. Plays an important role in intrathymic T-cell differentiation. Additionally, participates in the activity-dependent synapse formation of retinal ganglion cells (RGCs) in both the retina and dorsal lateral geniculate nucleus (dLGN). This is T-cell surface glycoprotein CD3 zeta chain (CD247) from Sus scrofa (Pig).